We begin with the raw amino-acid sequence, 88 residues long: Yop proteins translocation protein S (88 aa).

Transmembrane regions (helical) follow at residues Trp-15 to Val-35 and Leu-49 to Leu-69.

Belongs to the FliQ/MopD/SpaQ family.

Its subcellular location is the cell membrane. Its function is as follows. Component of the Yop secretion machinery. This Yersinia pestis protein is Yop proteins translocation protein S (yscS).